Consider the following 469-residue polypeptide: Cyclin-dependent kinase 14 (469 aa).

Phosphoserine is present on residues Ser-24, Ser-78, and Ser-95. A disordered region spans residues 103–133; it reads FKSSSAGKESPKVRRHSSPSSPTSPKFGKAD. Ser-134 is subject to Phosphoserine. Positions 135 to 419 constitute a Protein kinase domain; the sequence is YEKLEKLGEG…AQAALSHEYF (285 aa). ATP contacts are provided by residues 141–149 and Lys-164; that span reads LGEGSYATV. The Proton acceptor role is filled by Asp-256. Residues 449 to 469 form a disordered region; the sequence is ESMRAFGKNNSYGKSLSNSKH. Residues 456–469 show a composition bias toward polar residues; that stretch reads KNNSYGKSLSNSKH.

This sequence belongs to the protein kinase superfamily. CMGC Ser/Thr protein kinase family. CDC2/CDKX subfamily. As to quaternary structure, found in a complex with LRP6, CCNY and CAPRIN2 during G2/M stage; CAPRIN2 functions as a scaffold for the complex by binding to CCNY via its N terminus and to CDK14 via its C terminus. Interacts with CCNY; CCNY mediates its recruitment to the plasma membrane and promotes phosphorylation of LRP6. Interacts with CCDN3 and CDKN1A. Interacts with SEPT8. Interacts with 14-3-3 proteina YWHAB, YWHAE, YWHAH and YWHAQ. In the adult, widely expressed at low levels except in brain, kidney and testis where expression is high. In the brain, detected in cortex, hippocampus, dentate gyrus, amygdala cortex, parasubiculum and cerebellum. In the embryo, expressed predominantly in the nervous system.

It localises to the cell membrane. The protein localises to the cytoplasm. The protein resides in the nucleus. The catalysed reaction is L-seryl-[protein] + ATP = O-phospho-L-seryl-[protein] + ADP + H(+). It catalyses the reaction L-threonyl-[protein] + ATP = O-phospho-L-threonyl-[protein] + ADP + H(+). Serine/threonine-protein kinase activity is promoted by associated cyclins CCDN3 and CCNY and repressed by CDKN1A. Functionally, serine/threonine-protein kinase involved in the control of the eukaryotic cell cycle, whose activity is controlled by an associated cyclin. Acts as a cell-cycle regulator of Wnt signaling pathway during G2/M phase by mediating the phosphorylation of LRP6 at 'Ser-1490', leading to the activation of the Wnt signaling pathway. Acts as a regulator of cell cycle progression and cell proliferation via its interaction with CCDN3. Phosphorylates RB1 in vitro, however the relevance of such result remains to be confirmed in vivo. May also play a role in meiosis, neuron differentiation and may indirectly act as a negative regulator of insulin-responsive glucose transport. The polypeptide is Cyclin-dependent kinase 14 (Cdk14) (Mus musculus (Mouse)).